We begin with the raw amino-acid sequence, 306 residues long: Dihydroorotate dehydrogenase B (NAD(+)), catalytic subunit (306 aa).

FMN-binding positions include S22 and 46 to 47 (KT). Substrate contacts are provided by residues K46, 70–74 (NSIGL), and N128. N128 is a binding site for FMN. The active-site Nucleophile is C131. FMN is bound at residue K164. 191–192 (NT) contributes to the substrate binding site. FMN-binding positions include G216, 242–243 (GG), and 264–265 (GS).

It belongs to the dihydroorotate dehydrogenase family. Type 1 subfamily. As to quaternary structure, heterotetramer of 2 PyrK and 2 PyrD type B subunits. FMN serves as cofactor.

Its subcellular location is the cytoplasm. The catalysed reaction is (S)-dihydroorotate + NAD(+) = orotate + NADH + H(+). Its pathway is pyrimidine metabolism; UMP biosynthesis via de novo pathway; orotate from (S)-dihydroorotate (NAD(+) route): step 1/1. Its function is as follows. Catalyzes the conversion of dihydroorotate to orotate with NAD(+) as electron acceptor. The sequence is that of Dihydroorotate dehydrogenase B (NAD(+)), catalytic subunit (pyrD) from Endomicrobium trichonymphae.